Reading from the N-terminus, the 612-residue chain is Zinc metalloproteinase-disintegrin-like 2a (612 aa).

Residues 1–20 form the signal peptide; sequence MIQVLLVTICLAVFPYQGSS. Residues 21–189 constitute a propeptide that is removed on maturation; it reads IILGSGNVND…KKASQLNLTP (169 aa). Residues 199–395 enclose the Peptidase M12B domain; it reads KYIELVIVAD…NRPPCILNKP (197 aa). Residue glutamate 202 coordinates Ca(2+). N-linked (GlcNAc...) asparagine glycosylation occurs at asparagine 218. Aspartate 286 contacts Ca(2+). 3 disulfide bridges follow: cysteine 310/cysteine 390, cysteine 350/cysteine 374, and cysteine 352/cysteine 357. Residue histidine 335 coordinates Zn(2+). Glutamate 336 is a catalytic residue. 2 residues coordinate Zn(2+): histidine 339 and histidine 345. The Ca(2+) site is built by cysteine 390, asparagine 393, valine 405, asparagine 408, phenylalanine 410, glutamate 412, glutamate 415, and aspartate 418. One can recognise a Disintegrin domain in the interval 403 to 489; that stretch reads PPVCGNYFVE…DCPTDNFQRN (87 aa). 14 disulfide bridges follow: cysteine 406-cysteine 435, cysteine 417-cysteine 430, cysteine 419-cysteine 425, cysteine 429-cysteine 452, cysteine 443-cysteine 449, cysteine 448-cysteine 474, cysteine 461-cysteine 481, cysteine 468-cysteine 500, cysteine 493-cysteine 505, cysteine 512-cysteine 562, cysteine 527-cysteine 573, cysteine 540-cysteine 550, cysteine 557-cysteine 599, and cysteine 593-cysteine 605. Residues 467–469 carry the D/ECD-tripeptide motif; that stretch reads ECD.

It belongs to the venom metalloproteinase (M12B) family. P-III subfamily. Requires Zn(2+) as cofactor. Expressed by the venom gland.

The protein resides in the secreted. In terms of biological role, snake venom metalloproteinase that impairs hemostasis in the envenomed animal. This chain is Zinc metalloproteinase-disintegrin-like 2a, found in Crotalus adamanteus (Eastern diamondback rattlesnake).